Reading from the N-terminus, the 420-residue chain is UDP-glucuronic acid decarboxylase 1 (420 aa).

An N-acetylmethionine modification is found at methionine 1. The Cytoplasmic segment spans residues 1–19 (MVSKGLLRLVSSVNRRKMK). Residues 20–40 (LLLGIALFAYAASVWGNFVNM) traverse the membrane as a helical; Signal-anchor for type II membrane protein segment. Over 41–420 (RSIQENGELK…RVKKGRTRHS (380 aa)) the chain is Lumenal. A Phosphothreonine modification is found at threonine 94. Residues glycine 98, phenylalanine 99, valine 100, aspartate 119, asparagine 120, phenylalanine 122, threonine 123, glycine 124, aspartate 144, and valine 145 each coordinate NAD(+). Residues leucine 149 and tyrosine 150 each contribute to the UDP-alpha-D-glucuronate site. NAD(+)-binding residues include leucine 159 and serine 161. Lysine 177 contacts UDP-alpha-D-glucuronate. Threonine 178 is a binding site for NAD(+). Asparagine 185, glycine 188, lysine 191, and arginine 192 together coordinate UDP-alpha-D-glucuronate. NAD(+)-binding residues include alanine 200, tyrosine 231, and lysine 235. The Proton acceptor role is filled by tyrosine 231. Residues tyrosine 245, glutamine 248, and glutamate 249 each contribute to the UDP-alpha-D-glucuronate site. Residues threonine 261, histidine 267, and arginine 272 each coordinate NAD(+). N-linked (GlcNAc...) asparagine glycosylation is present at asparagine 316.

It belongs to the NAD(P)-dependent epimerase/dehydratase family. UDP-glucuronic acid decarboxylase subfamily. As to quaternary structure, homodimer and homotetramer. Interacts with AKT1. Requires NAD(+) as cofactor. As to expression, ubiquitous. Detected in heart, brain, spleen, lung, testis, liver, skeletal muscle and kidney.

It is found in the golgi apparatus. The protein resides in the golgi stack membrane. The enzyme catalyses UDP-alpha-D-glucuronate + H(+) = UDP-alpha-D-xylose + CO2. It participates in nucleotide-sugar biosynthesis; UDP-alpha-D-xylose biosynthesis; UDP-alpha-D-xylose from UDP-alpha-D-glucuronate: step 1/1. Functionally, catalyzes the NAD-dependent decarboxylation of UDP-glucuronic acid to UDP-xylose. Necessary for the biosynthesis of the core tetrasaccharide in glycosaminoglycan biosynthesis. The protein is UDP-glucuronic acid decarboxylase 1 of Rattus norvegicus (Rat).